The following is a 216-amino-acid chain: Ribosomal RNA small subunit methyltransferase G (216 aa).

Residues Gly-86, Leu-91, 137–138, and Arg-155 each bind S-adenosyl-L-methionine; that span reads VE.

Belongs to the methyltransferase superfamily. RNA methyltransferase RsmG family.

It localises to the cytoplasm. It catalyses the reaction guanosine(527) in 16S rRNA + S-adenosyl-L-methionine = N(7)-methylguanosine(527) in 16S rRNA + S-adenosyl-L-homocysteine. Its function is as follows. Specifically methylates the N7 position of guanine in position 527 of 16S rRNA. This Lawsonia intracellularis (strain PHE/MN1-00) protein is Ribosomal RNA small subunit methyltransferase G.